The chain runs to 277 residues: Putative serine/threonine-protein kinase PRKY (277 aa).

Positions 1 to 12 (MEAPGPAQAAAA) are enriched in low complexity. The interval 1–40 (MEAPGPAQAAAAESNSREVTEDAADWAPALCPSPEARSPE) is disordered. In terms of domain architecture, Protein kinase spans 49-277 (CDALVTMGTG…DFHVKTGRMM (229 aa)). ATP contacts are provided by residues 55–63 (MGTGTFGRV) and K78. D172 functions as the Proton acceptor in the catalytic mechanism. The residue at position 203 (T203) is a Phosphothreonine.

The protein belongs to the protein kinase superfamily. AGC Ser/Thr protein kinase family. cAMP subfamily. In terms of tissue distribution, ubiquitous.

The enzyme catalyses L-seryl-[protein] + ATP = O-phospho-L-seryl-[protein] + ADP + H(+). It carries out the reaction L-threonyl-[protein] + ATP = O-phospho-L-threonyl-[protein] + ADP + H(+). The sequence is that of Putative serine/threonine-protein kinase PRKY (PRKY) from Homo sapiens (Human).